The chain runs to 490 residues: Glucose-6-phosphate 1-dehydrogenase (490 aa).

Residues arginine 49, 91-92 (DV), and lysine 146 contribute to the NADP(+) site. Residues histidine 176, lysine 180, glutamate 214, and aspartate 233 each contribute to the substrate site. Catalysis depends on histidine 238, which acts as the Proton acceptor. 2 residues coordinate substrate: lysine 338 and lysine 343.

The protein belongs to the glucose-6-phosphate dehydrogenase family.

It catalyses the reaction D-glucose 6-phosphate + NADP(+) = 6-phospho-D-glucono-1,5-lactone + NADPH + H(+). It participates in carbohydrate degradation; pentose phosphate pathway; D-ribulose 5-phosphate from D-glucose 6-phosphate (oxidative stage): step 1/3. Its function is as follows. Catalyzes the oxidation of glucose 6-phosphate to 6-phosphogluconolactone. This Buchnera aphidicola subsp. Schizaphis graminum (strain Sg) protein is Glucose-6-phosphate 1-dehydrogenase.